Consider the following 498-residue polypeptide: Glycerol kinase (498 aa).

Thr12 lines the ADP pocket. Positions 12, 13, and 14 each coordinate ATP. Sn-glycerol 3-phosphate is bound at residue Thr12. Arg16 provides a ligand contact to ADP. Residues Arg82, Tyr134, and Asp243 each coordinate sn-glycerol 3-phosphate. Arg82, Tyr134, Asp243, and Gln244 together coordinate glycerol. Residues Thr265 and Gly308 each contribute to the ADP site. Positions 265, 308, 312, and 411 each coordinate ATP. Gly411 serves as a coordination point for ADP.

This sequence belongs to the FGGY kinase family.

It catalyses the reaction glycerol + ATP = sn-glycerol 3-phosphate + ADP + H(+). The protein operates within polyol metabolism; glycerol degradation via glycerol kinase pathway; sn-glycerol 3-phosphate from glycerol: step 1/1. With respect to regulation, inhibited by fructose 1,6-bisphosphate (FBP). Its function is as follows. Key enzyme in the regulation of glycerol uptake and metabolism. Catalyzes the phosphorylation of glycerol to yield sn-glycerol 3-phosphate. The chain is Glycerol kinase from Brucella suis (strain ATCC 23445 / NCTC 10510).